We begin with the raw amino-acid sequence, 34 residues long: Photosystem II reaction center protein M (34 aa).

A helical transmembrane segment spans residues 5–25; the sequence is ILAFIAIVLFISVPTAFLLII.

It belongs to the PsbM family. As to quaternary structure, PSII is composed of 1 copy each of membrane proteins PsbA, PsbB, PsbC, PsbD, PsbE, PsbF, PsbH, PsbI, PsbJ, PsbK, PsbL, PsbM, PsbT, PsbX, PsbY, PsbZ, Psb30/Ycf12, at least 3 peripheral proteins of the oxygen-evolving complex and a large number of cofactors. It forms dimeric complexes.

The protein localises to the plastid. It localises to the chloroplast thylakoid membrane. Its function is as follows. One of the components of the core complex of photosystem II (PSII). PSII is a light-driven water:plastoquinone oxidoreductase that uses light energy to abstract electrons from H(2)O, generating O(2) and a proton gradient subsequently used for ATP formation. It consists of a core antenna complex that captures photons, and an electron transfer chain that converts photonic excitation into a charge separation. This subunit is found at the monomer-monomer interface. The protein is Photosystem II reaction center protein M of Cycas taitungensis (Prince sago).